A 378-amino-acid polypeptide reads, in one-letter code: MTQSTFGIEEEYFLTDLTSRQVARRNVEAFATACQYELGERVTREMFAAQFEVVTPVLHSLTDARQCLEGARRALARLAREFDCGVLAAGTHPLGQWRRVRATDMPRYRAIFDDYRMVASRSVLAGLHVHVGVAEGVDRIRLMNRLTPWLPLLLGLSASSPFWNGRPSGLMSYRQAVCDEWPRMGIPDHFADEAEYQRYVQVMTDTGCIRSAANLWWNIRPSLRYPTLELRIADACPRLDDALCLAGLFRAMVEHVQLTPHHAWCDDPLTRVLTLENRWRAKRQGLRGLFIEPASQRLLTFATWLEEVLERIAIQVPASDRWILEHARNLALHGGSAEAQLAEYRGARANGLEHGEALHQVVDSLMAQTELHPSQQLA.

Belongs to the glutamate--cysteine ligase type 2 family. YbdK subfamily.

It catalyses the reaction L-cysteine + L-glutamate + ATP = gamma-L-glutamyl-L-cysteine + ADP + phosphate + H(+). Its function is as follows. ATP-dependent carboxylate-amine ligase which exhibits weak glutamate--cysteine ligase activity. This Ectopseudomonas mendocina (strain ymp) (Pseudomonas mendocina) protein is Putative glutamate--cysteine ligase 2.